A 506-amino-acid polypeptide reads, in one-letter code: 2,3-bisphosphoglycerate-independent phosphoglycerate mutase (506 aa).

Aspartate 13 and serine 63 together coordinate Mn(2+). The Phosphoserine intermediate role is filled by serine 63. Substrate contacts are provided by residues histidine 124, 153 to 154 (RD), arginine 183, arginine 189, 254 to 257 (RADR), and lysine 330. Aspartate 396, histidine 400, aspartate 437, histidine 438, and histidine 456 together coordinate Mn(2+).

The protein belongs to the BPG-independent phosphoglycerate mutase family. As to quaternary structure, monomer. It depends on Mn(2+) as a cofactor.

The catalysed reaction is (2R)-2-phosphoglycerate = (2R)-3-phosphoglycerate. Its pathway is carbohydrate degradation; glycolysis; pyruvate from D-glyceraldehyde 3-phosphate: step 3/5. Catalyzes the interconversion of 2-phosphoglycerate and 3-phosphoglycerate. The chain is 2,3-bisphosphoglycerate-independent phosphoglycerate mutase from Cereibacter sphaeroides (strain KD131 / KCTC 12085) (Rhodobacter sphaeroides).